Consider the following 212-residue polypeptide: Acyl-homoserine-lactone synthase (212 aa).

It belongs to the autoinducer synthase family.

The catalysed reaction is a fatty acyl-[ACP] + S-adenosyl-L-methionine = an N-acyl-L-homoserine lactone + S-methyl-5'-thioadenosine + holo-[ACP] + H(+). Functionally, required for the synthesis of OHHL (N-(3-oxohexanoyl)-L-homoserine lactone), an autoinducer molecule which binds to ExpR and thus acts in virulence (soft rot disease) through the activation of genes for plant tissue macerating enzymes. The polypeptide is Acyl-homoserine-lactone synthase (expI) (Dickeya dadantii (strain 3937) (Erwinia chrysanthemi (strain 3937))).